The chain runs to 273 residues: Putative deoxyribonuclease TATDN1 homolog (273 aa).

Residues glutamate 91, histidine 125, histidine 147, and aspartate 195 each coordinate a divalent metal cation.

The protein belongs to the metallo-dependent hydrolases superfamily. TatD-type hydrolase family. A divalent metal cation is required as a cofactor.

The protein resides in the nucleus. Putative deoxyribonuclease. This chain is Putative deoxyribonuclease TATDN1 homolog, found in Encephalitozoon cuniculi (strain GB-M1) (Microsporidian parasite).